The chain runs to 415 residues: Gamma-glutamyl phosphate reductase (415 aa).

Belongs to the gamma-glutamyl phosphate reductase family.

Its subcellular location is the cytoplasm. The catalysed reaction is L-glutamate 5-semialdehyde + phosphate + NADP(+) = L-glutamyl 5-phosphate + NADPH + H(+). Its pathway is amino-acid biosynthesis; L-proline biosynthesis; L-glutamate 5-semialdehyde from L-glutamate: step 2/2. Its function is as follows. Catalyzes the NADPH-dependent reduction of L-glutamate 5-phosphate into L-glutamate 5-semialdehyde and phosphate. The product spontaneously undergoes cyclization to form 1-pyrroline-5-carboxylate. In Clostridium perfringens (strain ATCC 13124 / DSM 756 / JCM 1290 / NCIMB 6125 / NCTC 8237 / Type A), this protein is Gamma-glutamyl phosphate reductase.